Consider the following 70-residue polypeptide: DNA-directed RNA polymerase subunit epsilon (70 aa).

This sequence belongs to the RNA polymerase subunit epsilon family. RNAP is composed of a core of 2 alpha, a beta and a beta' subunit. The core is associated with a delta subunit, and at least one of epsilon or omega. When a sigma factor is associated with the core the holoenzyme is formed, which can initiate transcription.

The enzyme catalyses RNA(n) + a ribonucleoside 5'-triphosphate = RNA(n+1) + diphosphate. Its function is as follows. A non-essential component of RNA polymerase (RNAP). The protein is DNA-directed RNA polymerase subunit epsilon of Enterococcus faecalis (strain ATCC 700802 / V583).